We begin with the raw amino-acid sequence, 297 residues long: N-acetylmuramic acid 6-phosphate etherase (297 aa).

The 164-residue stretch at 55–218 folds into the SIS domain; it reads AAAALKSGGR…STGAMVKFGK (164 aa). Glu83 acts as the Proton donor in catalysis. Glu114 is a catalytic residue.

It belongs to the GCKR-like family. MurNAc-6-P etherase subfamily. In terms of assembly, homodimer.

It catalyses the reaction N-acetyl-D-muramate 6-phosphate + H2O = N-acetyl-D-glucosamine 6-phosphate + (R)-lactate. The protein operates within amino-sugar metabolism; 1,6-anhydro-N-acetylmuramate degradation. It functions in the pathway amino-sugar metabolism; N-acetylmuramate degradation. Its pathway is cell wall biogenesis; peptidoglycan recycling. In terms of biological role, specifically catalyzes the cleavage of the D-lactyl ether substituent of MurNAc 6-phosphate, producing GlcNAc 6-phosphate and D-lactate. Together with AnmK, is also required for the utilization of anhydro-N-acetylmuramic acid (anhMurNAc) either imported from the medium or derived from its own cell wall murein, and thus plays a role in cell wall recycling. The sequence is that of N-acetylmuramic acid 6-phosphate etherase from Salmonella schwarzengrund (strain CVM19633).